A 505-amino-acid chain; its full sequence is Protein nucleotidyltransferase YdiU (505 aa).

ATP contacts are provided by glycine 102, glycine 104, arginine 105, lysine 125, aspartate 137, glycine 138, arginine 188, and arginine 195. Aspartate 264 functions as the Proton acceptor in the catalytic mechanism. Mg(2+) contacts are provided by asparagine 265 and aspartate 274. Residue aspartate 274 coordinates ATP.

It belongs to the SELO family. Mg(2+) serves as cofactor. Mn(2+) is required as a cofactor.

It carries out the reaction L-seryl-[protein] + ATP = 3-O-(5'-adenylyl)-L-seryl-[protein] + diphosphate. The enzyme catalyses L-threonyl-[protein] + ATP = 3-O-(5'-adenylyl)-L-threonyl-[protein] + diphosphate. It catalyses the reaction L-tyrosyl-[protein] + ATP = O-(5'-adenylyl)-L-tyrosyl-[protein] + diphosphate. The catalysed reaction is L-histidyl-[protein] + UTP = N(tele)-(5'-uridylyl)-L-histidyl-[protein] + diphosphate. It carries out the reaction L-seryl-[protein] + UTP = O-(5'-uridylyl)-L-seryl-[protein] + diphosphate. The enzyme catalyses L-tyrosyl-[protein] + UTP = O-(5'-uridylyl)-L-tyrosyl-[protein] + diphosphate. In terms of biological role, nucleotidyltransferase involved in the post-translational modification of proteins. It can catalyze the addition of adenosine monophosphate (AMP) or uridine monophosphate (UMP) to a protein, resulting in modifications known as AMPylation and UMPylation. This chain is Protein nucleotidyltransferase YdiU, found in Nitrobacter winogradskyi (strain ATCC 25391 / DSM 10237 / CIP 104748 / NCIMB 11846 / Nb-255).